A 312-amino-acid chain; its full sequence is tRNA uridine(34) hydroxylase (312 aa).

The Rhodanese domain maps to 124-218 (SDPEVLLIDT…YLEEVPQEQT (95 aa)). Residue cysteine 178 is the Cysteine persulfide intermediate of the active site. Composition is skewed to basic and acidic residues over residues 279–294 (TRESARERQKQIELAR) and 302–312 (IGRDPRQLNEA). Residues 279–312 (TRESARERQKQIELARARNQPHPIGRDPRQLNEA) are disordered.

This sequence belongs to the TrhO family.

The catalysed reaction is uridine(34) in tRNA + AH2 + O2 = 5-hydroxyuridine(34) in tRNA + A + H2O. In terms of biological role, catalyzes oxygen-dependent 5-hydroxyuridine (ho5U) modification at position 34 in tRNAs. This chain is tRNA uridine(34) hydroxylase, found in Ectopseudomonas mendocina (strain ymp) (Pseudomonas mendocina).